The chain runs to 493 residues: MSFKDLRSFIDHLEANGELKRISYPVDPHLEMTEIADRVLRAKGPALLFENPTNHSMPVLANLFGTPKRVAMALGKEDPLALRDVGELLAFLKEPEPPRGFKDAISKIPMFKQALNMPPKTVRNPACQQVVKTGDEVDLTQLPIQHCWPGDVAPLVTWGLTITKGPRKSRQNLGIYRQQLLGKNKLIMRWLSHRGGALDFADFKEQFPGERYPVVVALGSDPVTILGAVTPVPDAMSEYAFAGLLRGERTEVCKALSCDLEVPASSEIILEGYIDPDEMAEEGPYGDHTGYYNETDKFPVFTVTHITHRKDPIYHSTYTGRPPDEPAMLGVALNEVFVPILRKQYPEIIDFYLPPEGCSYRMAVISIRKQYPGHAKRVMMGAWSFLRQFMYTKFIVVVDDDVNCRDWNDVIWAITTRMDPKRDTVMIDNTPIDYLDFASPVAGLGSKMGLDATNKWEGETNREWGTPIVMDPKVKQKIDSIWDELGIDDSPTL.

Position 172 (asparagine 172) interacts with Mn(2+). Residues 175 to 177, 189 to 191, and 194 to 195 each bind prenylated FMN; these read IYR, RWL, and RG. Position 238 (glutamate 238) interacts with Mn(2+). Catalysis depends on aspartate 287, which acts as the Proton donor.

Belongs to the UbiD family. In terms of assembly, homohexamer. Requires prenylated FMN as cofactor. The cofactor is Mn(2+).

It localises to the cell membrane. The enzyme catalyses a 4-hydroxy-3-(all-trans-polyprenyl)benzoate + H(+) = a 2-(all-trans-polyprenyl)phenol + CO2. It functions in the pathway cofactor biosynthesis; ubiquinone biosynthesis. Catalyzes the decarboxylation of 3-octaprenyl-4-hydroxy benzoate to 2-octaprenylphenol, an intermediate step in ubiquinone biosynthesis. This chain is 3-octaprenyl-4-hydroxybenzoate carboxy-lyase, found in Shewanella sp. (strain ANA-3).